A 514-amino-acid chain; its full sequence is Prolyl 3,4-dihydroxylase OGFOD1 (514 aa).

The 108-residue stretch at 114–221 (GAVDCSCNIY…RVSISGWFHT (108 aa)) folds into the Fe2OG dioxygenase domain. Residues H132 and D134 each contribute to the Fe cation site. Position 146 (Y146) interacts with 2-oxoglutarate. Residue H200 coordinates Fe cation. R212 contributes to the 2-oxoglutarate binding site.

It belongs to the TPA1 family. Monomer and homodimer. Requires Fe(2+) as cofactor. L-ascorbate is required as a cofactor.

It catalyses the reaction [ribosomal protein uS12]-L-proline + 2-oxoglutarate + O2 = [ribosomal protein uS12]-(3S)-3-hydroxy-L-proline + succinate + CO2. The enzyme catalyses [ribosomal protein uS12]-(3S)-3-hydroxy-L-proline + 2-oxoglutarate + O2 = [ribosomal protein uS12]-(3S)-3,4-dihydroxy-L-proline + succinate + CO2. Functionally, prolyl 3,4-dihydroxylase that catalyzes 3,4-dihydroxylation of 'Pro-61' of small ribosomal subunit uS12 (RPS23), thereby regulating protein translation termination efficiency. This is Prolyl 3,4-dihydroxylase OGFOD1 (Ogd) from Ostreococcus tauri.